Reading from the N-terminus, the 273-residue chain is 3-methyl-2-oxobutanoate hydroxymethyltransferase (273 aa).

Mg(2+) is bound by residues Asp53 and Asp92. 3-methyl-2-oxobutanoate is bound by residues 53–54, Asp92, and Lys122; that span reads DS. Mg(2+) is bound at residue Glu124. The Proton acceptor role is filled by Glu191.

The protein belongs to the PanB family. In terms of assembly, homodecamer; pentamer of dimers. Mg(2+) is required as a cofactor.

The protein resides in the cytoplasm. It carries out the reaction 3-methyl-2-oxobutanoate + (6R)-5,10-methylene-5,6,7,8-tetrahydrofolate + H2O = 2-dehydropantoate + (6S)-5,6,7,8-tetrahydrofolate. Its pathway is cofactor biosynthesis; (R)-pantothenate biosynthesis; (R)-pantoate from 3-methyl-2-oxobutanoate: step 1/2. In terms of biological role, catalyzes the reversible reaction in which hydroxymethyl group from 5,10-methylenetetrahydrofolate is transferred onto alpha-ketoisovalerate to form ketopantoate. The chain is 3-methyl-2-oxobutanoate hydroxymethyltransferase from Phocaeicola vulgatus (strain ATCC 8482 / DSM 1447 / JCM 5826 / CCUG 4940 / NBRC 14291 / NCTC 11154) (Bacteroides vulgatus).